The following is a 60-amino-acid chain: Protein translocase subunit SecE (60 aa).

A helical membrane pass occupies residues 31-51; that stretch reads IIVVSTVIFFLVFFYALDIGI.

This sequence belongs to the SecE/SEC61-gamma family. In terms of assembly, component of the Sec protein translocase complex. Heterotrimer consisting of SecY, SecE and SecG subunits. The heterotrimers can form oligomers, although 1 heterotrimer is thought to be able to translocate proteins. Interacts with the ribosome. Interacts with SecDF, and other proteins may be involved. Interacts with SecA.

The protein localises to the cell membrane. Functionally, essential subunit of the Sec protein translocation channel SecYEG. Clamps together the 2 halves of SecY. May contact the channel plug during translocation. The sequence is that of Protein translocase subunit SecE from Staphylococcus epidermidis (strain ATCC 35984 / DSM 28319 / BCRC 17069 / CCUG 31568 / BM 3577 / RP62A).